A 271-amino-acid chain; its full sequence is UPF0328 protein ECU09_0020 (271 aa).

The protein belongs to the UPF0328 family.

This chain is UPF0328 protein ECU09_0020, found in Encephalitozoon cuniculi (strain GB-M1) (Microsporidian parasite).